Reading from the N-terminus, the 1985-residue chain is Non-reducing polyketide synthase ntnG (1985 aa).

Residues 7–243 (LLFGDQADAP…TILPAFGAVH (237 aa)) form an N-terminal acylcarrier protein transacylase (SAT) domain region. One can recognise a Ketosynthase family 3 (KS3) domain in the interval 364–792 (SGSVAIIGMS…GGNSCFVLEE (429 aa)). Residues cysteine 536, histidine 671, and histidine 711 each act as for beta-ketoacyl synthase activity in the active site. Residues 889 to 1148 (VFAFTGQGAH…VNFEQAISHC (260 aa)) form a malonyl-CoA:ACP transacylase (MAT) domain region. The active-site For acyl/malonyl transferase activity is the serine 980. Positions 1261–1392 (HRLVKQEDTA…VRLRDEHAFD (132 aa)) are N-terminal hotdog fold. Positions 1261 to 1567 (HRLVKQEDTA…FRKMPRTTLH (307 aa)) constitute a PKS/mFAS DH domain. The interval 1265–1566 (KQEDTAKEQH…RFRKMPRTTL (302 aa)) is product template (PT) domain. Histidine 1293 (proton acceptor; for dehydratase activity) is an active-site residue. Residues 1414-1567 (AGGRANRFQG…FRKMPRTTLH (154 aa)) are C-terminal hotdog fold. Aspartate 1479 (proton donor; for dehydratase activity) is an active-site residue. The span at 1578-1605 (NTKQVPHPTTNGSAIANGVNRNPSHNEP) shows a compositional bias: polar residues. Residues 1578-1622 (NTKQVPHPTTNGSAIANGVNRNPSHNEPSTPPVANGVNGTNGDQS) form a disordered region. A Carrier domain is found at 1622–1699 (SDRKSLYSVL…DAQRELRRLE (78 aa)). Serine 1659 carries the O-(pantetheine 4'-phosphoryl)serine modification. The segment at 1719 to 1913 (TRECNVVLMQ…DCTFVIWAKK (195 aa)) is thioesterase (TE) domain.

Its pathway is secondary metabolite biosynthesis; terpenoid biosynthesis. Its function is as follows. Non-reducing polyketide synthase; part of the gene cluster that mediates the biosynthesis of the meroterpenoids nectripenoids A and B, as well as cochliquninone D and isocochliquninone E. The pathway probably begins with the HR-PKS ntnH that catalyzes two chain-extension steps to form a reduced triketide, which then primes the SAT domain in the NR-PKS ntnG to initiate three more cycles of extension to give a linear hexaketide corresponding to the polyketide part of nectripenoids. The FAD-dependent monooxygenase ntnJ then performs an oxidative decarboxylation at C11 of the ntnH/ntnG product, via an electrophilic aromatic hydroxylation with concomitant ipso-decarboxylation. The membrane-bound polyprenyl transferase ntnF then introduces a farnesyl group before the FAD-dependent monooxygenase ntnK functions as the first epoxidase on terminal C12'-C13' olefin, followed by a second epoxidation on C7'-C8' catalyzed by ntnA. The terpene cyclase/mutase ntnI then initiates the sequential tricyclic ring formation through protonation of the terminal epoxide and catalyzes the regioselective and stereoselective 6/6/6-tricyclic ring formation. The cytochrome P450 monooxygenase ntnM may then hydroxylate C1'. The sequence is that of Non-reducing polyketide synthase ntnG from Nectria sp.